The primary structure comprises 291 residues: Elongation factor Ts (291 aa).

The tract at residues 78–81 (TDFV) is involved in Mg(2+) ion dislocation from EF-Tu.

The protein belongs to the EF-Ts family.

Its subcellular location is the cytoplasm. Functionally, associates with the EF-Tu.GDP complex and induces the exchange of GDP to GTP. It remains bound to the aminoacyl-tRNA.EF-Tu.GTP complex up to the GTP hydrolysis stage on the ribosome. The polypeptide is Elongation factor Ts (Ureaplasma parvum serovar 3 (strain ATCC 27815 / 27 / NCTC 11736)).